The primary structure comprises 630 residues: tRNA uridine 5-carboxymethylaminomethyl modification enzyme MnmG (630 aa).

13-18 contacts FAD; it reads GGGHAG. 273–287 provides a ligand contact to NAD(+); that stretch reads GPRYCPSIEDKIHRF.

This sequence belongs to the MnmG family. In terms of assembly, homodimer. Heterotetramer of two MnmE and two MnmG subunits. The cofactor is FAD.

It is found in the cytoplasm. Functionally, NAD-binding protein involved in the addition of a carboxymethylaminomethyl (cmnm) group at the wobble position (U34) of certain tRNAs, forming tRNA-cmnm(5)s(2)U34. This Pseudomonas putida (strain ATCC 700007 / DSM 6899 / JCM 31910 / BCRC 17059 / LMG 24140 / F1) protein is tRNA uridine 5-carboxymethylaminomethyl modification enzyme MnmG.